Consider the following 238-residue polypeptide: Deoxyribose-phosphate aldolase (238 aa).

The Proton donor/acceptor role is filled by Asp-104. Catalysis depends on Lys-168, which acts as the Schiff-base intermediate with acetaldehyde. Residue Lys-197 is the Proton donor/acceptor of the active site.

This sequence belongs to the DeoC/FbaB aldolase family. DeoC type 1 subfamily.

The protein localises to the cytoplasm. The enzyme catalyses 2-deoxy-D-ribose 5-phosphate = D-glyceraldehyde 3-phosphate + acetaldehyde. It functions in the pathway carbohydrate degradation; 2-deoxy-D-ribose 1-phosphate degradation; D-glyceraldehyde 3-phosphate and acetaldehyde from 2-deoxy-alpha-D-ribose 1-phosphate: step 2/2. Catalyzes a reversible aldol reaction between acetaldehyde and D-glyceraldehyde 3-phosphate to generate 2-deoxy-D-ribose 5-phosphate. The polypeptide is Deoxyribose-phosphate aldolase (Bacteroides thetaiotaomicron (strain ATCC 29148 / DSM 2079 / JCM 5827 / CCUG 10774 / NCTC 10582 / VPI-5482 / E50)).